The primary structure comprises 454 residues: Probable diacyglycerol O-acyltransferase tgs2 (454 aa).

Histidine 139 (proton acceptor) is an active-site residue.

The protein belongs to the long-chain O-acyltransferase family.

It catalyses the reaction an acyl-CoA + a 1,2-diacyl-sn-glycerol = a triacyl-sn-glycerol + CoA. The catalysed reaction is a long chain fatty alcohol + a fatty acyl-CoA = a wax ester + CoA. It functions in the pathway glycerolipid metabolism; triacylglycerol biosynthesis. Its function is as follows. Catalyzes the terminal and only committed step in triacylglycerol synthesis by using diacylglycerol and fatty acyl CoA as substrates. Required for storage lipid synthesis. The chain is Probable diacyglycerol O-acyltransferase tgs2 (tgs2) from Mycobacterium tuberculosis (strain CDC 1551 / Oshkosh).